A 213-amino-acid polypeptide reads, in one-letter code: Holliday junction resolvase RecU (213 aa).

Residues T99, D101, E114, and Q133 each contribute to the Mg(2+) site.

The protein belongs to the RecU family. The cofactor is Mg(2+).

It is found in the cytoplasm. The catalysed reaction is Endonucleolytic cleavage at a junction such as a reciprocal single-stranded crossover between two homologous DNA duplexes (Holliday junction).. Its function is as follows. Endonuclease that resolves Holliday junction intermediates in genetic recombination. Cleaves mobile four-strand junctions by introducing symmetrical nicks in paired strands. Promotes annealing of linear ssDNA with homologous dsDNA. Required for DNA repair, homologous recombination and chromosome segregation. The polypeptide is Holliday junction resolvase RecU (Lactococcus lactis subsp. cremoris (strain SK11)).